Reading from the N-terminus, the 218-residue chain is Small ribosomal subunit protein uS3c (218 aa).

In terms of domain architecture, KH type-2 spans isoleucine 43 to glycine 118.

This sequence belongs to the universal ribosomal protein uS3 family. Part of the 30S ribosomal subunit.

It is found in the plastid. Its subcellular location is the chloroplast. The polypeptide is Small ribosomal subunit protein uS3c (rps3) (Gossypium barbadense (Sea Island cotton)).